The chain runs to 235 residues: Phosphoribosylaminoimidazole-succinocarboxamide synthase (235 aa).

This sequence belongs to the SAICAR synthetase family.

The catalysed reaction is 5-amino-1-(5-phospho-D-ribosyl)imidazole-4-carboxylate + L-aspartate + ATP = (2S)-2-[5-amino-1-(5-phospho-beta-D-ribosyl)imidazole-4-carboxamido]succinate + ADP + phosphate + 2 H(+). The protein operates within purine metabolism; IMP biosynthesis via de novo pathway; 5-amino-1-(5-phospho-D-ribosyl)imidazole-4-carboxamide from 5-amino-1-(5-phospho-D-ribosyl)imidazole-4-carboxylate: step 1/2. This Prosthecochloris aestuarii (strain DSM 271 / SK 413) protein is Phosphoribosylaminoimidazole-succinocarboxamide synthase.